We begin with the raw amino-acid sequence, 312 residues long: Ribosomal protein uL3 glutamine methyltransferase (312 aa).

Belongs to the protein N5-glutamine methyltransferase family. PrmB subfamily.

The catalysed reaction is L-glutaminyl-[ribosomal protein uL3] + S-adenosyl-L-methionine = N(5)-methyl-L-glutaminyl-[ribosomal protein uL3] + S-adenosyl-L-homocysteine + H(+). Functionally, methylates large ribosomal subunit protein uL3 on a specific glutamine residue. This chain is Ribosomal protein uL3 glutamine methyltransferase, found in Xylella fastidiosa (strain 9a5c).